The primary structure comprises 447 residues: UPF0210 protein LSEI_0897 (447 aa).

It belongs to the UPF0210 family. Homodimer.

The polypeptide is UPF0210 protein LSEI_0897 (Lacticaseibacillus paracasei (strain ATCC 334 / BCRC 17002 / CCUG 31169 / CIP 107868 / KCTC 3260 / NRRL B-441) (Lactobacillus paracasei)).